The following is a 211-amino-acid chain: Thymidine kinase (211 aa).

Residues S9 to S16 and D87 to Q90 each bind ATP. E88 (proton acceptor) is an active-site residue. Residues C145, C147, C182, and H185 each contribute to the Zn(2+) site.

It belongs to the thymidine kinase family. In terms of assembly, homotetramer.

The protein localises to the cytoplasm. The catalysed reaction is thymidine + ATP = dTMP + ADP + H(+). The sequence is that of Thymidine kinase from Rhodopirellula baltica (strain DSM 10527 / NCIMB 13988 / SH1).